We begin with the raw amino-acid sequence, 100 residues long: Small ribosomal subunit protein bS6 (100 aa).

The protein belongs to the bacterial ribosomal protein bS6 family.

In terms of biological role, binds together with bS18 to 16S ribosomal RNA. In Tropheryma whipplei (strain Twist) (Whipple's bacillus), this protein is Small ribosomal subunit protein bS6.